A 430-amino-acid polypeptide reads, in one-letter code: Serine--tRNA ligase (430 aa).

L-serine is bound at residue 234–236 (TAE). 265 to 267 (RRE) is a binding site for ATP. Glu288 provides a ligand contact to L-serine. 352 to 355 (EISS) is a binding site for ATP. Ser388 contacts L-serine.

This sequence belongs to the class-II aminoacyl-tRNA synthetase family. Type-1 seryl-tRNA synthetase subfamily. In terms of assembly, homodimer. The tRNA molecule binds across the dimer.

The protein resides in the cytoplasm. It catalyses the reaction tRNA(Ser) + L-serine + ATP = L-seryl-tRNA(Ser) + AMP + diphosphate + H(+). It carries out the reaction tRNA(Sec) + L-serine + ATP = L-seryl-tRNA(Sec) + AMP + diphosphate + H(+). The protein operates within aminoacyl-tRNA biosynthesis; selenocysteinyl-tRNA(Sec) biosynthesis; L-seryl-tRNA(Sec) from L-serine and tRNA(Sec): step 1/1. Catalyzes the attachment of serine to tRNA(Ser). Is also able to aminoacylate tRNA(Sec) with serine, to form the misacylated tRNA L-seryl-tRNA(Sec), which will be further converted into selenocysteinyl-tRNA(Sec). This chain is Serine--tRNA ligase, found in Thermosynechococcus vestitus (strain NIES-2133 / IAM M-273 / BP-1).